The primary structure comprises 546 residues: Chaperonin GroEL (546 aa).

ATP contacts are provided by residues 30 to 33 (TLGP), K51, 87 to 91 (DGTTT), G415, 479 to 481 (NAA), and D495. The tract at residues 526–546 (KEDAPMPGGMPGGMGGMGMDM) is disordered. Over residues 534-546 (GMPGGMGGMGMDM) the composition is skewed to gly residues.

This sequence belongs to the chaperonin (HSP60) family. As to quaternary structure, forms a cylinder of 14 subunits composed of two heptameric rings stacked back-to-back. Interacts with the co-chaperonin GroES.

Its subcellular location is the cytoplasm. It carries out the reaction ATP + H2O + a folded polypeptide = ADP + phosphate + an unfolded polypeptide.. In terms of biological role, together with its co-chaperonin GroES, plays an essential role in assisting protein folding. The GroEL-GroES system forms a nano-cage that allows encapsulation of the non-native substrate proteins and provides a physical environment optimized to promote and accelerate protein folding. The chain is Chaperonin GroEL from Burkholderia thailandensis.